A 457-amino-acid polypeptide reads, in one-letter code: Tubulin beta chain (457 aa).

Residues Gln11, Glu69, Ser138, Gly142, Thr143, Gly144, Asn204, and Asn226 each coordinate GTP. Mg(2+) is bound at residue Glu69. Residues 431–457 (EGEEEEDAYAEGAVVNGDQSYEDQYAA) form a disordered region.

This sequence belongs to the tubulin family. As to quaternary structure, dimer of alpha and beta chains. A typical microtubule is a hollow water-filled tube with an outer diameter of 25 nm and an inner diameter of 15 nM. Alpha-beta heterodimers associate head-to-tail to form protofilaments running lengthwise along the microtubule wall with the beta-tubulin subunit facing the microtubule plus end conferring a structural polarity. Microtubules usually have 13 protofilaments but different protofilament numbers can be found in some organisms and specialized cells. The cofactor is Mg(2+).

The protein resides in the cytoplasm. It is found in the cytoskeleton. In terms of biological role, tubulin is the major constituent of microtubules, a cylinder consisting of laterally associated linear protofilaments composed of alpha- and beta-tubulin heterodimers. Microtubules grow by the addition of GTP-tubulin dimers to the microtubule end, where a stabilizing cap forms. Below the cap, tubulin dimers are in GDP-bound state, owing to GTPase activity of alpha-tubulin. This is Tubulin beta chain (TUBB1) from Porphyra purpurea (Red seaweed).